A 377-amino-acid chain; its full sequence is Mechanosensory abnormality protein 6 (377 aa).

At 1-13 (MGLQSAAAHFINR) the chain is on the cytoplasmic side. Residues 14-34 (FIIWITIFMVACFLLRLLVVL) form a helical membrane-spanning segment. Residues 35 to 377 (DLNKRVYNHT…HCDLTHSYIT (343 aa)) lie on the Extracellular side of the membrane. Cys48 and Cys369 are joined by a disulfide. Asn94 carries N-linked (GlcNAc...) asparagine glycosylation.

The protein belongs to the paraoxonase family. In terms of assembly, component of a non-voltage-gated amiloride-sensitive cation channel complex (also called the degenerin channel complex) composed of at least the mec-2, mec-4, mec-6 and mec-10 subunits; the complex mediates mechanotransduction in touch cells. Interacts with mec-2, mec-4 and mec-10. In terms of processing, glycosylated. Expressed in neurons including the six touch receptors, ventral cord motor neurons, HSN, PVD, PVC, IL1, and several neurons near the nerve ring, in the anal ganglion and in the male tail sensory rays, in muscles including the body wall, vulval, intestinal, anal depressor and sphincter muscles, and in the excretory canal.

It localises to the cell membrane. Its subcellular location is the cell projection. It is found in the axon. Subunit of an amiloride-sensitive cation channel (degenerin channel complex) permeable for sodium, potassium, lithium and N-methylglucamine, and required for mechanosensory transduction (touch sensitivity). Interacts with degenerin channel proteins and stabilizes the channel. Plays a role in mechanosensory transduction (touch sensitivity). The chain is Mechanosensory abnormality protein 6 from Caenorhabditis elegans.